The chain runs to 157 residues: NAD(P)H-quinone oxidoreductase subunit N (157 aa).

This sequence belongs to the complex I NdhN subunit family. As to quaternary structure, NDH-1 can be composed of about 15 different subunits; different subcomplexes with different compositions have been identified which probably have different functions.

The protein localises to the cellular thylakoid membrane. It catalyses the reaction a plastoquinone + NADH + (n+1) H(+)(in) = a plastoquinol + NAD(+) + n H(+)(out). The catalysed reaction is a plastoquinone + NADPH + (n+1) H(+)(in) = a plastoquinol + NADP(+) + n H(+)(out). NDH-1 shuttles electrons from an unknown electron donor, via FMN and iron-sulfur (Fe-S) centers, to quinones in the respiratory and/or the photosynthetic chain. The immediate electron acceptor for the enzyme in this species is believed to be plastoquinone. Couples the redox reaction to proton translocation, and thus conserves the redox energy in a proton gradient. Cyanobacterial NDH-1 also plays a role in inorganic carbon-concentration. The polypeptide is NAD(P)H-quinone oxidoreductase subunit N (Picosynechococcus sp. (strain ATCC 27264 / PCC 7002 / PR-6) (Agmenellum quadruplicatum)).